The following is a 508-amino-acid chain: Glucose-1-phosphate adenylyltransferase small subunit 1, chloroplastic (508 aa).

Residues 1–27 (MSSIVTSGVINVPRSSSSSKNLSFSSS) form a disordered region. The transit peptide at 1-59 (MSSIVTSGVINVPRSSSSSKNLSFSSSSQLSGNKILTVSGNGAPRGRCTLKHVFLTPKA) directs the protein to the chloroplast. Residues 15-27 (SSSSSKNLSFSSS) show a composition bias toward low complexity.

This sequence belongs to the bacterial/plant glucose-1-phosphate adenylyltransferase family. As to quaternary structure, heterotetramer. In terms of tissue distribution, seeds.

The protein resides in the plastid. Its subcellular location is the chloroplast. It catalyses the reaction alpha-D-glucose 1-phosphate + ATP + H(+) = ADP-alpha-D-glucose + diphosphate. The protein operates within glycan biosynthesis; starch biosynthesis. Its activity is regulated as follows. Activated by 3'phosphoglycerate, inhibited by orthophosphate. Allosteric regulation. Functionally, this protein plays a role in synthesis of starch. It catalyzes the synthesis of the activated glycosyl donor, ADP-glucose from Glc-1-P and ATP. This is Glucose-1-phosphate adenylyltransferase small subunit 1, chloroplastic (AGPC) from Vicia faba (Broad bean).